We begin with the raw amino-acid sequence, 213 residues long: Large ribosomal subunit protein uL3 (213 aa).

A disordered region spans residues 131 to 168; the sequence is GPMSHGSKNHRLPGSTGAGTTPGRVYPGKRMAGRSGND.

This sequence belongs to the universal ribosomal protein uL3 family. Part of the 50S ribosomal subunit. Forms a cluster with proteins L14 and L19.

Functionally, one of the primary rRNA binding proteins, it binds directly near the 3'-end of the 23S rRNA, where it nucleates assembly of the 50S subunit. The polypeptide is Large ribosomal subunit protein uL3 (Synechococcus elongatus (strain ATCC 33912 / PCC 7942 / FACHB-805) (Anacystis nidulans R2)).